A 152-amino-acid chain; its full sequence is Transcriptional regulator MraZ (152 aa).

SpoVT-AbrB domains lie at 5–52 (HSNR…PMPE) and 81–124 (ATEV…DQGR).

The protein belongs to the MraZ family. In terms of assembly, forms oligomers.

It localises to the cytoplasm. The protein localises to the nucleoid. This Solidesulfovibrio magneticus (strain ATCC 700980 / DSM 13731 / RS-1) (Desulfovibrio magneticus) protein is Transcriptional regulator MraZ.